Consider the following 509-residue polypeptide: Protein OS-9 homolog (509 aa).

Positions 1 to 23 are cleaved as a signal peptide; it reads MRRQSRIVASLLVLACASSGAFA. A compositionally biased stretch (polar residues) spans 64-74; sequence SPDLNDISEQT. The tract at residues 64 to 91 is disordered; it reads SPDLNDISEQTPLKDESEESIRDGSSGE. The span at 75–91 shows a compositional bias: basic and acidic residues; it reads PLKDESEESIRDGSSGE. Asparagine 120 carries N-linked (GlcNAc...) asparagine glycosylation. One can recognise an MRH domain in the interval 151–291; sequence GKCLYYISGW…LIYTPRLCND (141 aa). A disulfide bond links cysteine 153 and cysteine 166. Residues tryptophan 160, tryptophan 161, glutamine 173, aspartate 246, arginine 252, glutamate 273, and tyrosine 279 each coordinate a mannooligosaccharide derivative. Cystine bridges form between cysteine 245/cysteine 277 and cysteine 260/cysteine 289. Positions 433–509 are disordered; it reads GVVDTDEDEE…GSEEIFKDEL (77 aa). Positions 436–451 are enriched in acidic residues; the sequence is DTDEDEEDGYENEEGE. The span at 452–461 shows a compositional bias: basic and acidic residues; it reads TDKREQRENT. Residues 489–502 are compositionally biased toward acidic residues; that stretch reads RSEDGEDPDVDGSE. The Prevents secretion from ER motif lies at 506-509; it reads KDEL.

Belongs to the OS-9 family. Interacts with missfolded ER lumenal proteins.

It localises to the endoplasmic reticulum membrane. In terms of biological role, lectin involved in the quality control of the secretory pathway. As a member of the endoplasmic reticulum-associated degradation lumenal (ERAD-L) surveillance system, targets misfolded endoplasmic reticulum lumenal glycoproteins for degradation. In Emericella nidulans (strain FGSC A4 / ATCC 38163 / CBS 112.46 / NRRL 194 / M139) (Aspergillus nidulans), this protein is Protein OS-9 homolog (yos9).